A 1207-amino-acid chain; its full sequence is DNA-directed RNA polymerase subunit beta' (1207 aa).

Residues cysteine 60, cysteine 62, cysteine 75, and cysteine 78 each coordinate Zn(2+). Mg(2+) contacts are provided by aspartate 449, aspartate 451, and aspartate 453. 4 residues coordinate Zn(2+): cysteine 822, cysteine 896, cysteine 903, and cysteine 906.

The protein belongs to the RNA polymerase beta' chain family. As to quaternary structure, the RNAP catalytic core consists of 2 alpha, 1 beta, 1 beta' and 1 omega subunit. When a sigma factor is associated with the core the holoenzyme is formed, which can initiate transcription. Mg(2+) is required as a cofactor. Zn(2+) serves as cofactor.

It carries out the reaction RNA(n) + a ribonucleoside 5'-triphosphate = RNA(n+1) + diphosphate. In terms of biological role, DNA-dependent RNA polymerase catalyzes the transcription of DNA into RNA using the four ribonucleoside triphosphates as substrates. This chain is DNA-directed RNA polymerase subunit beta', found in Staphylococcus aureus (strain MRSA252).